The chain runs to 213 residues: Pyridoxine/pyridoxamine 5'-phosphate oxidase (213 aa).

Substrate-binding positions include 8 to 11 and Lys-67; that span reads RREY. FMN contacts are provided by residues 62–67, 77–78, Arg-83, Lys-84, and Gln-106; these read RIVLLK and FT. 3 residues coordinate substrate: Tyr-124, Arg-128, and Ser-132. FMN is bound by residues 141-142 and Trp-186; that span reads QS. 192 to 194 lines the substrate pocket; that stretch reads RLH. An FMN-binding site is contributed by Arg-196.

Belongs to the pyridoxamine 5'-phosphate oxidase family. As to quaternary structure, homodimer. Requires FMN as cofactor.

The catalysed reaction is pyridoxamine 5'-phosphate + O2 + H2O = pyridoxal 5'-phosphate + H2O2 + NH4(+). It carries out the reaction pyridoxine 5'-phosphate + O2 = pyridoxal 5'-phosphate + H2O2. The protein operates within cofactor metabolism; pyridoxal 5'-phosphate salvage; pyridoxal 5'-phosphate from pyridoxamine 5'-phosphate: step 1/1. It participates in cofactor metabolism; pyridoxal 5'-phosphate salvage; pyridoxal 5'-phosphate from pyridoxine 5'-phosphate: step 1/1. Its function is as follows. Catalyzes the oxidation of either pyridoxine 5'-phosphate (PNP) or pyridoxamine 5'-phosphate (PMP) into pyridoxal 5'-phosphate (PLP). The protein is Pyridoxine/pyridoxamine 5'-phosphate oxidase of Shewanella sediminis (strain HAW-EB3).